A 977-amino-acid polypeptide reads, in one-letter code: Ephrin type-A receptor 1 (977 aa).

An N-terminal signal peptide occupies residues 1-26 (MERRWPLGLALLLLLLCAPLPPGARA). Residues 27–548 (EEVTLMDTST…PVSRSLTGGE (522 aa)) lie on the Extracellular side of the membrane. Positions 28–210 (EVTLMDTSTA…FYQRCAETVH (183 aa)) constitute an Eph LBD domain. Fibronectin type-III domains follow at residues 333 to 446 (PPSA…MGHA) and 448 to 539 (SLSG…TSPP). N-linked (GlcNAc...) asparagine glycosylation is found at asparagine 415 and asparagine 479. A helical transmembrane segment spans residues 549 to 569 (IVAVIFGLLLGIALLIGIYVF). Residues 570-977 (RSRRGQRQRQ…ILCSIQGFKD (408 aa)) are Cytoplasmic-facing. Residues tyrosine 600 and tyrosine 606 each carry the phosphotyrosine; by autocatalysis modification. In terms of domain architecture, Protein kinase spans 625–885 (LIVDTVIGEG…QLQAHLEQLL (261 aa)). Residues 631–639 (IGEGEFGEV) and lysine 657 contribute to the ATP site. Aspartate 750 functions as the Proton acceptor in the catalytic mechanism. A Phosphotyrosine; by autocatalysis modification is found at tyrosine 782. Serine 907 and serine 911 each carry phosphoserine. The region spanning 914–977 (IPYRSVSEWL…ILCSIQGFKD (64 aa)) is the SAM domain. The short motif at 975-977 (FKD) is the PDZ-binding element.

It belongs to the protein kinase superfamily. Tyr protein kinase family. Ephrin receptor subfamily. In terms of assembly, homodimer. Forms a signaling complex with LCK; PTK2B/PYK2 and PI3-kinase upon activation by EFNA1; regulates T-lymphocytes migration. Interacts (via SAM domain) with ILK (via ANK repeats); stimulated by EFNA1 but independent of the kinase activity of EPHA1. Interacts (kinase activity-dependent) with PTK2/FAK1. Post-translationally, phosphorylated. Autophosphorylation is stimulated by its ligand EFNA1. Ubiquitinated. Preferentially expressed in epithelial cells including skin, kidney, liver and thymus. Expressed in myogenic progenitor cells.

The protein localises to the cell membrane. The catalysed reaction is L-tyrosyl-[protein] + ATP = O-phospho-L-tyrosyl-[protein] + ADP + H(+). In terms of biological role, receptor tyrosine kinase which binds promiscuously membrane-bound ephrin-A family ligands residing on adjacent cells, leading to contact-dependent bidirectional signaling into neighboring cells. The signaling pathway downstream of the receptor is referred to as forward signaling while the signaling pathway downstream of the ephrin ligand is referred to as reverse signaling. Binds with a low affinity EFNA3 and EFNA4 and with a high affinity to EFNA1 which most probably constitutes its cognate/functional ligand. Upon activation by EFNA1 induces cell attachment to the extracellular matrix inhibiting cell spreading and motility through regulation of ILK and downstream RHOA and RAC. Also plays a role in angiogenesis and regulates cell proliferation. May play a role in apoptosis. The sequence is that of Ephrin type-A receptor 1 (Epha1) from Mus musculus (Mouse).